Reading from the N-terminus, the 257-residue chain is Protein TONNEAU 1b (257 aa).

The region spanning 73 to 105 is the LisH domain; the sequence is SGRLLSALICEYLDWAQLNHTLKVYQPECNSAK. Disordered regions lie at residues 148 to 216 and 231 to 257; these read QVMG…EDMP and LDRKTRNLTSSWRNVKDGTSEEEEGKD. Residues 187–199 show a composition bias toward low complexity; the sequence is SVSASQASGAATS. 2 stretches are compositionally biased toward basic and acidic residues: residues 201-212 and 244-257; these read YRKDESNWRYDT and NVKDGTSEEEEGKD.

Interacts with CEN1, LNG1/TRM2 and LNG2/TRM1 (via C-terminus).

The protein localises to the cytoplasm. It localises to the cytoskeleton. Functionally, involved in the control of the dynamic organization of the cortical cytoskeleton. May play a role in the organization of microtubule arrays at the centrosome through interaction with centrin 1 (CEN1). The sequence is that of Protein TONNEAU 1b (TON1B) from Arabidopsis thaliana (Mouse-ear cress).